We begin with the raw amino-acid sequence, 171 residues long: Lipoprotein signal peptidase (171 aa).

2 consecutive transmembrane segments (helical) span residues 67–87 and 88–108; these read YALL…LWRS and TSKL…GNAY. Active-site residues include Asp118 and Asp136. The helical transmembrane segment at 127–147 threads the bilayer; it reads FSWYVFNLADAAIVAGVALLL.

It belongs to the peptidase A8 family.

The protein localises to the cell inner membrane. It catalyses the reaction Release of signal peptides from bacterial membrane prolipoproteins. Hydrolyzes -Xaa-Yaa-Zaa-|-(S,diacylglyceryl)Cys-, in which Xaa is hydrophobic (preferably Leu), and Yaa (Ala or Ser) and Zaa (Gly or Ala) have small, neutral side chains.. It participates in protein modification; lipoprotein biosynthesis (signal peptide cleavage). Functionally, this protein specifically catalyzes the removal of signal peptides from prolipoproteins. This chain is Lipoprotein signal peptidase, found in Methylocella silvestris (strain DSM 15510 / CIP 108128 / LMG 27833 / NCIMB 13906 / BL2).